A 396-amino-acid chain; its full sequence is Elongation factor Tu (396 aa).

In terms of domain architecture, tr-type G spans 10-206 (KPHVNVGTIG…ALDSYIPEPE (197 aa)). Residues 19–26 (GHVDHGKT) form a G1 region. 19–26 (GHVDHGKT) contacts GTP. Thr26 is a binding site for Mg(2+). The tract at residues 60–64 (GITIN) is G2. Residues 81–84 (DCPG) are G3. GTP contacts are provided by residues 81-85 (DCPGH) and 136-139 (NKCD). The tract at residues 136–139 (NKCD) is G4. Residues 174–176 (SAL) are G5.

It belongs to the TRAFAC class translation factor GTPase superfamily. Classic translation factor GTPase family. EF-Tu/EF-1A subfamily. Monomer.

It localises to the cytoplasm. It catalyses the reaction GTP + H2O = GDP + phosphate + H(+). GTP hydrolase that promotes the GTP-dependent binding of aminoacyl-tRNA to the A-site of ribosomes during protein biosynthesis. The protein is Elongation factor Tu of Acinetobacter baumannii (strain ATCC 17978 / DSM 105126 / CIP 53.77 / LMG 1025 / NCDC KC755 / 5377).